The primary structure comprises 512 residues: 2-isopropylmalate synthase (512 aa).

A Pyruvate carboxyltransferase domain is found at 4-266 (IQFFDTTLRD…ETNIVLNQFK (263 aa)). Residues aspartate 13, histidine 201, histidine 203, and asparagine 237 each contribute to the Mn(2+) site. A regulatory domain region spans residues 390-512 (ELKHLQVQYV…SKQADFEEVK (123 aa)).

This sequence belongs to the alpha-IPM synthase/homocitrate synthase family. LeuA type 1 subfamily. As to quaternary structure, homodimer. Mn(2+) serves as cofactor.

The protein resides in the cytoplasm. It catalyses the reaction 3-methyl-2-oxobutanoate + acetyl-CoA + H2O = (2S)-2-isopropylmalate + CoA + H(+). The protein operates within amino-acid biosynthesis; L-leucine biosynthesis; L-leucine from 3-methyl-2-oxobutanoate: step 1/4. In terms of biological role, catalyzes the condensation of the acetyl group of acetyl-CoA with 3-methyl-2-oxobutanoate (2-ketoisovalerate) to form 3-carboxy-3-hydroxy-4-methylpentanoate (2-isopropylmalate). This chain is 2-isopropylmalate synthase, found in Listeria monocytogenes serotype 4b (strain CLIP80459).